Reading from the N-terminus, the 417-residue chain is Serine--tRNA ligase (417 aa).

232-234 serves as a coordination point for L-serine; sequence TAE. ATP is bound by residues 263–265 and V279; that span reads RRE. Position 286 (E286) interacts with L-serine. 350–353 provides a ligand contact to ATP; it reads EISS. S385 contributes to the L-serine binding site.

Belongs to the class-II aminoacyl-tRNA synthetase family. Type-1 seryl-tRNA synthetase subfamily. In terms of assembly, homodimer. The tRNA molecule binds across the dimer.

It localises to the cytoplasm. The enzyme catalyses tRNA(Ser) + L-serine + ATP = L-seryl-tRNA(Ser) + AMP + diphosphate + H(+). It catalyses the reaction tRNA(Sec) + L-serine + ATP = L-seryl-tRNA(Sec) + AMP + diphosphate + H(+). The protein operates within aminoacyl-tRNA biosynthesis; selenocysteinyl-tRNA(Sec) biosynthesis; L-seryl-tRNA(Sec) from L-serine and tRNA(Sec): step 1/1. Its function is as follows. Catalyzes the attachment of serine to tRNA(Ser). Is also able to aminoacylate tRNA(Sec) with serine, to form the misacylated tRNA L-seryl-tRNA(Sec), which will be further converted into selenocysteinyl-tRNA(Sec). In Leptospira borgpetersenii serovar Hardjo-bovis (strain JB197), this protein is Serine--tRNA ligase.